We begin with the raw amino-acid sequence, 201 residues long: NAD(P)H quinone oxidoreductase PST2 (201 aa).

The Flavodoxin-like domain maps to 6-192 (VAIIIYSLYH…SIAQQQGEDF (187 aa)). FMN is bound by residues 12–16 (SLYHH) and 112–164 (VFVS…SPWG).

This sequence belongs to the WrbA family. Requires FMN as cofactor.

The protein localises to the cell membrane. The catalysed reaction is a quinone + NADH + H(+) = a quinol + NAD(+). It carries out the reaction a quinone + NADPH + H(+) = a quinol + NADP(+). Its function is as follows. Flavodoxin-like protein (FLP) that plays a role in cell wall integrity, oxidative stress protection and virulence. FLPs act as NAD(P)H quinone oxidoreductases. Reduces ubiquinone (coenzyme Q), enabling it to serve as an antioxidant in the membrane. This chain is NAD(P)H quinone oxidoreductase PST2, found in Candida albicans (strain SC5314 / ATCC MYA-2876) (Yeast).